Here is a 299-residue protein sequence, read N- to C-terminus: Acetylglutamate kinase (299 aa).

Substrate-binding positions include 72–73 (GG), Arg94, and Asn196.

Belongs to the acetylglutamate kinase family. ArgB subfamily.

The protein resides in the cytoplasm. The enzyme catalyses N-acetyl-L-glutamate + ATP = N-acetyl-L-glutamyl 5-phosphate + ADP. Its pathway is amino-acid biosynthesis; L-arginine biosynthesis; N(2)-acetyl-L-ornithine from L-glutamate: step 2/4. Functionally, catalyzes the ATP-dependent phosphorylation of N-acetyl-L-glutamate. This Burkholderia thailandensis (strain ATCC 700388 / DSM 13276 / CCUG 48851 / CIP 106301 / E264) protein is Acetylglutamate kinase.